A 492-amino-acid polypeptide reads, in one-letter code: N-succinylglutamate 5-semialdehyde dehydrogenase (492 aa).

220-225 (GSANTG) is an NAD(+) binding site. Active-site residues include Glu-243 and Cys-277.

Belongs to the aldehyde dehydrogenase family. AstD subfamily.

It carries out the reaction N-succinyl-L-glutamate 5-semialdehyde + NAD(+) + H2O = N-succinyl-L-glutamate + NADH + 2 H(+). It functions in the pathway amino-acid degradation; L-arginine degradation via AST pathway; L-glutamate and succinate from L-arginine: step 4/5. Catalyzes the NAD-dependent reduction of succinylglutamate semialdehyde into succinylglutamate. The sequence is that of N-succinylglutamate 5-semialdehyde dehydrogenase from Shigella flexneri serotype 5b (strain 8401).